Consider the following 274-residue polypeptide: Glutamate--cysteine ligase regulatory subunit (274 aa).

Lysine 263 is modified (N6-acetyllysine).

This sequence belongs to the aldo/keto reductase family. Glutamate--cysteine ligase light chain subfamily. In terms of assembly, heterodimer of a catalytic heavy chain and a regulatory light chain. In terms of tissue distribution, in all tissues examined. Highest levels in skeletal muscle.

It participates in sulfur metabolism; glutathione biosynthesis; glutathione from L-cysteine and L-glutamate: step 1/2. The protein is Glutamate--cysteine ligase regulatory subunit (GCLM) of Homo sapiens (Human).